A 277-amino-acid chain; its full sequence is Large ribosomal subunit protein uL2 (277 aa).

The tract at residues 222-277 (GSVMNPNDHPHGGGEGKAPVGRKAPSTPWGKPALGLKTRNKKAKSDKLIVRRRNQK) is disordered.

It belongs to the universal ribosomal protein uL2 family. Part of the 50S ribosomal subunit. Forms a bridge to the 30S subunit in the 70S ribosome.

Functionally, one of the primary rRNA binding proteins. Required for association of the 30S and 50S subunits to form the 70S ribosome, for tRNA binding and peptide bond formation. It has been suggested to have peptidyltransferase activity; this is somewhat controversial. Makes several contacts with the 16S rRNA in the 70S ribosome. This is Large ribosomal subunit protein uL2 from Streptococcus agalactiae serotype Ia (strain ATCC 27591 / A909 / CDC SS700).